Reading from the N-terminus, the 331-residue chain is Ornithine carbamoyltransferase, catabolic (331 aa).

Carbamoyl phosphate-binding positions include 57-60 (STRT), Gln82, Arg106, and 133-136 (HPTQ). L-ornithine is bound by residues Asn166, Asp230, and 234-235 (SM). Carbamoyl phosphate contacts are provided by residues 272–273 (CL) and Arg317.

It belongs to the aspartate/ornithine carbamoyltransferase superfamily. OTCase family.

Its subcellular location is the cytoplasm. The enzyme catalyses carbamoyl phosphate + L-ornithine = L-citrulline + phosphate + H(+). It participates in amino-acid degradation; L-arginine degradation via ADI pathway; carbamoyl phosphate from L-arginine: step 2/2. Its function is as follows. Reversibly catalyzes the transfer of the carbamoyl group from carbamoyl phosphate (CP) to the N(epsilon) atom of ornithine (ORN) to produce L-citrulline. This is Ornithine carbamoyltransferase, catabolic (arcB) from Clostridium perfringens (strain ATCC 13124 / DSM 756 / JCM 1290 / NCIMB 6125 / NCTC 8237 / Type A).